Here is a 267-residue protein sequence, read N- to C-terminus: Shikimate dehydrogenase (NADP(+)) (267 aa).

Shikimate contacts are provided by residues 14–16 (SLS) and threonine 61. Residue lysine 65 is the Proton acceptor of the active site. Shikimate-binding residues include asparagine 86 and aspartate 101. NADP(+)-binding positions include 126 to 130 (GAGGA), 150 to 155 (NRTHSK), and leucine 213. Tyrosine 215 contacts shikimate. Residue glycine 236 coordinates NADP(+).

This sequence belongs to the shikimate dehydrogenase family. Homodimer.

It carries out the reaction shikimate + NADP(+) = 3-dehydroshikimate + NADPH + H(+). The protein operates within metabolic intermediate biosynthesis; chorismate biosynthesis; chorismate from D-erythrose 4-phosphate and phosphoenolpyruvate: step 4/7. Involved in the biosynthesis of the chorismate, which leads to the biosynthesis of aromatic amino acids. Catalyzes the reversible NADPH linked reduction of 3-dehydroshikimate (DHSA) to yield shikimate (SA). The sequence is that of Shikimate dehydrogenase (NADP(+)) from Vesicomyosocius okutanii subsp. Calyptogena okutanii (strain HA).